Consider the following 535-residue polypeptide: Isoleucine N-monooxygenase 1 (535 aa).

Over 1–8 the chain is Cytoplasmic; sequence MGLMPDFL. The chain crosses the membrane as a helical; Signal-anchor for type II membrane protein span at residues 9–29; it reads SLCHEFPWTFLLVVIFSFMIF. Topologically, residues 30–535 are lumenal; sequence KVTKTHLVNK…AAELYRTNEI (506 aa). N-linked (GlcNAc...) asparagine glycosylation is found at Asn38, Asn232, and Asn404. Cys470 is a binding site for heme.

Belongs to the cytochrome P450 family. Requires heme as cofactor. In terms of tissue distribution, exclusively expressed in aerial parts. Highest expression in the apical leaves. Also detected in the second leaf from the top and in the stem. Not expressed in older leaves or roots.

It is found in the microsome membrane. The catalysed reaction is L-isoleucine + 2 reduced [NADPH--hemoprotein reductase] + 2 O2 = (1E,2S)-2-methylbutanal oxime + 2 oxidized [NADPH--hemoprotein reductase] + CO2 + 3 H2O + 2 H(+). It carries out the reaction L-isoleucine + reduced [NADPH--hemoprotein reductase] + O2 = N-hydroxy-L-isoleucine + oxidized [NADPH--hemoprotein reductase] + H2O + 2 H(+). The enzyme catalyses N-hydroxy-L-isoleucine + reduced [NADPH--hemoprotein reductase] + O2 = N,N-dihydroxy-L-isoleucine + oxidized [NADPH--hemoprotein reductase] + H2O + H(+). It catalyses the reaction L-valine + 2 reduced [NADPH--hemoprotein reductase] + 2 O2 = (E)-2-methylpropanal oxime + 2 oxidized [NADPH--hemoprotein reductase] + CO2 + 3 H2O + 2 H(+). The catalysed reaction is L-valine + reduced [NADPH--hemoprotein reductase] + O2 = N-hydroxy-L-valine + oxidized [NADPH--hemoprotein reductase] + H2O + 2 H(+). It carries out the reaction N-hydroxy-L-valine + reduced [NADPH--hemoprotein reductase] + O2 = N,N-dihydroxy-L-valine + oxidized [NADPH--hemoprotein reductase] + H2O + H(+). Its pathway is secondary metabolite biosynthesis. Functionally, involved in the biosynthesis of the cyanogenic glucosides linamarin and lotaustralin and of the nitirle glucosides rhodiocyanoside A and D. Can use L-isoleucine &gt; L-valine as substrate, but not L-leucine, L-phenylalanine or L-tyrosine. Catalyzes multi-step reactions starting with two successive N-hydroxylations using L-isoleucine and, to a lower extent, L-valine as substrates leading to the formation of N,N-dihydroxy-L-valine and N,N-dihydroxy-L-isoleucine, respectively; following spontaneous reactions lead to the production of (E)-2-methylpropanal oxime and (1E,2S)-2-methylbutanal oxime, respectively. The protein is Isoleucine N-monooxygenase 1 of Lotus japonicus (Lotus corniculatus var. japonicus).